The primary structure comprises 435 residues: MKQDMIVILDLGSHENTVLARAIRALGVYSEIYPHDITVEELKALPNVKGIIINGGLNNVIDGVAIDVNPSIYTMGIPVMAAGHDKATCAVKLPAFTDDIEAIKAAIKSFVFDTCQAEANWNMANFVNDQIELIRRQVGDKKVLLALSGGVDSSVVAALLLKAIGENLVCVHVNHGLMRKGESEDVVEVFSNQLKANLVYVDVTDRFLDKLAGVEDPEQKRKIIGGEFIRVFEEEARKLDGIDFLGQGTIYPDIVESGTKTAKMVKSHHNVGGLPEDLKFQLVEPLRQLFKDEVRACGLELGLPYEMVYRQPFPGPGLGVRCLGAITRDRLEAVRESDAILREEFQIAGLDKKVWQYFTVVPDFKSVGVRDNARSFDWPVIIRAVNTVDAMTATIEPVDWPILMKITDRILKEVKNVNRVCYDMSPKPNATIEWE.

Positions Met1–Asn120 constitute a Glutamine amidotransferase type-1; truncated domain. The GMPS ATP-PPase domain maps to Trp121–Arg310. ATP is bound at residue Ser148–Ser154.

In terms of assembly, homodimer.

It catalyses the reaction XMP + L-glutamine + ATP + H2O = GMP + L-glutamate + AMP + diphosphate + 2 H(+). Its pathway is purine metabolism; GMP biosynthesis; GMP from XMP (L-Gln route): step 1/1. Functionally, catalyzes the synthesis of GMP from XMP. This chain is Putative GMP synthase [glutamine-hydrolyzing] 2 (guaA2), found in Bacteroides thetaiotaomicron (strain ATCC 29148 / DSM 2079 / JCM 5827 / CCUG 10774 / NCTC 10582 / VPI-5482 / E50).